The primary structure comprises 328 residues: RNA 3'-terminal phosphate cyclase (328 aa).

Residues Q100 and 276–280 contribute to the ATP site; that span reads HLADQ. H302 functions as the Tele-AMP-histidine intermediate in the catalytic mechanism.

It belongs to the RNA 3'-terminal cyclase family. Type 1 subfamily.

It is found in the cytoplasm. It catalyses the reaction a 3'-end 3'-phospho-ribonucleotide-RNA + ATP = a 3'-end 2',3'-cyclophospho-ribonucleotide-RNA + AMP + diphosphate. In terms of biological role, catalyzes the conversion of 3'-phosphate to a 2',3'-cyclic phosphodiester at the end of RNA. The mechanism of action of the enzyme occurs in 3 steps: (A) adenylation of the enzyme by ATP; (B) transfer of adenylate to an RNA-N3'P to produce RNA-N3'PP5'A; (C) and attack of the adjacent 2'-hydroxyl on the 3'-phosphorus in the diester linkage to produce the cyclic end product. The biological role of this enzyme is unknown but it is likely to function in some aspects of cellular RNA processing. This chain is RNA 3'-terminal phosphate cyclase (rtcA), found in Archaeoglobus fulgidus (strain ATCC 49558 / DSM 4304 / JCM 9628 / NBRC 100126 / VC-16).